A 463-amino-acid polypeptide reads, in one-letter code: A-type ATP synthase subunit B (463 aa).

This sequence belongs to the ATPase alpha/beta chains family. In terms of assembly, has multiple subunits with at least A(3), B(3), C, D, E, F, H, I and proteolipid K(x).

Its subcellular location is the cell membrane. Its function is as follows. Component of the A-type ATP synthase that produces ATP from ADP in the presence of a proton gradient across the membrane. The B chain is a regulatory subunit. This chain is A-type ATP synthase subunit B, found in Desulfurococcus sp. (strain SY).